Reading from the N-terminus, the 229-residue chain is Cytochrome c oxidase subunit 2 (229 aa).

Residues 1–26 (MSTWANLGLQDSASPLMEQLIFFHDH) lie on the Mitochondrial intermembrane side of the membrane. The chain crosses the membrane as a helical span at residues 27-48 (ALLILVMITVLVGYLMFMLFFN). Over 49 to 62 (SYVNRFLLHGQLIE) the chain is Mitochondrial matrix. Residues 63–82 (MIWTILPAIILLFIAMPSLR) form a helical membrane-spanning segment. At 83-229 (LLYLLDEINE…IKWISNSVNS (147 aa)) the chain is on the mitochondrial intermembrane side. The Cu cation site is built by histidine 161, cysteine 196, glutamate 198, cysteine 200, histidine 204, and methionine 207. Glutamate 198 provides a ligand contact to Mg(2+).

It belongs to the cytochrome c oxidase subunit 2 family. As to quaternary structure, component of the cytochrome c oxidase (complex IV, CIV), a multisubunit enzyme composed of a catalytic core of 3 subunits and several supernumerary subunits. The complex exists as a monomer or a dimer and forms supercomplexes (SCs) in the inner mitochondrial membrane with ubiquinol-cytochrome c oxidoreductase (cytochrome b-c1 complex, complex III, CIII). The cofactor is Cu cation.

It localises to the mitochondrion inner membrane. It catalyses the reaction 4 Fe(II)-[cytochrome c] + O2 + 8 H(+)(in) = 4 Fe(III)-[cytochrome c] + 2 H2O + 4 H(+)(out). In terms of biological role, component of the cytochrome c oxidase, the last enzyme in the mitochondrial electron transport chain which drives oxidative phosphorylation. The respiratory chain contains 3 multisubunit complexes succinate dehydrogenase (complex II, CII), ubiquinol-cytochrome c oxidoreductase (cytochrome b-c1 complex, complex III, CIII) and cytochrome c oxidase (complex IV, CIV), that cooperate to transfer electrons derived from NADH and succinate to molecular oxygen, creating an electrochemical gradient over the inner membrane that drives transmembrane transport and the ATP synthase. Cytochrome c oxidase is the component of the respiratory chain that catalyzes the reduction of oxygen to water. Electrons originating from reduced cytochrome c in the intermembrane space (IMS) are transferred via the dinuclear copper A center (CU(A)) of subunit 2 and heme A of subunit 1 to the active site in subunit 1, a binuclear center (BNC) formed by heme A3 and copper B (CU(B)). The BNC reduces molecular oxygen to 2 water molecules using 4 electrons from cytochrome c in the IMS and 4 protons from the mitochondrial matrix. The polypeptide is Cytochrome c oxidase subunit 2 (mt:CoII) (Drosophila miranda (Fruit fly)).